A 356-amino-acid polypeptide reads, in one-letter code: Tyrosine recombinase XerS (356 aa).

One can recognise a Core-binding (CB) domain in the interval 16–121; it reads IMPWYVLEYY…ALSSLFKYLT (106 aa). The 186-residue stretch at 169 to 354 folds into the Tyr recombinase domain; that stretch reads EFLEYIDCEY…VNDEQKNALD (186 aa). Catalysis depends on residues arginine 210, lysine 234, histidine 306, arginine 309, and histidine 332. The O-(3'-phospho-DNA)-tyrosine intermediate role is filled by tyrosine 341.

This sequence belongs to the 'phage' integrase family. XerS subfamily.

Its subcellular location is the cytoplasm. With respect to regulation, ftsK is required for recombination. Site-specific tyrosine recombinase, which acts by catalyzing the cutting and rejoining of the recombining DNA molecules. Essential to convert dimers of the bacterial chromosome into monomers to permit their segregation at cell division. The protein is Tyrosine recombinase XerS of Streptococcus agalactiae serotype Ia (strain ATCC 27591 / A909 / CDC SS700).